Reading from the N-terminus, the 117-residue chain is Large ribosomal subunit protein uL18 (117 aa).

It belongs to the universal ribosomal protein uL18 family. Part of the 50S ribosomal subunit; part of the 5S rRNA/L5/L18/L25 subcomplex. Contacts the 5S and 23S rRNAs.

In terms of biological role, this is one of the proteins that bind and probably mediate the attachment of the 5S RNA into the large ribosomal subunit, where it forms part of the central protuberance. This is Large ribosomal subunit protein uL18 from Methylococcus capsulatus (strain ATCC 33009 / NCIMB 11132 / Bath).